The primary structure comprises 1311 residues: Suppressor of presenilin protein 4 (1311 aa).

The span at 1–11 (MSSEPTSSIES) shows a compositional bias: polar residues. Disordered stretches follow at residues 1–58 (MSSE…DDLN) and 75–95 (MFEDDEEDTVSRRRTRRSTAH). C2H2-type zinc fingers lie at residues 112–134 (HACHKCPSRYESKSSLANHTKMH) and 141–163 (FACELCDFSASTLKSLTHHNNIH). The tract at residues 226-304 (EFDTTPPPIL…PPPVRKDVEK (79 aa)) is disordered. Positions 280 to 293 (SPKGSLPSSSASSV) are enriched in low complexity. 4 consecutive C2H2-type zinc fingers follow at residues 327–349 (QRCPHCPFTTSTVTRLNRHSGGH), 355–379 (YICPSENCNFMCRKAGFLQKHYILH), 451–476 (KKCNIGECEFLTQTLTQLIVHKVKTH), and 487–510 (FLCLTCGHRAKSYAALRTHKLIEH). The tract at residues 544–563 (VKEEPKEADGDESGDESFDS) is disordered. The segment covering 552-561 (DGDESGDESF) has biased composition (acidic residues). C2H2-type zinc fingers lie at residues 585-607 (FCCNMCPYKAPTMNRCQRHYDKH), 613-635 (FKCQYCSWSSRSKEVIVNHEKLH), 709-731 (FQCTDCPYTSKYRGDMRSHKKRH), 737-759 (YRCVQCTYTTNRPVSLKDHLKQH), 794-816 (YCCDKCPYVTLALGCLWRHHRNH), and 823-845 (NICSNCSYSSIDQRKMEEHTIIH). Positions 865 to 1002 (RPVSSLTDLN…ESPEPDESVE (138 aa)) are disordered. Over residues 874–897 (NSEKMNERKSTKRKMLDKVEKMEV) the composition is skewed to basic and acidic residues. Positions 898–907 (GEDEEDDEES) are enriched in acidic residues. Positions 908 to 920 (VDKGTDDGDYKQR) are enriched in basic and acidic residues. The segment covering 956-979 (NRINYSLLSKNGSGKPTPSTSSAN) has biased composition (polar residues). 6 C2H2-type zinc fingers span residues 1022-1044 (LKCPDCPYKSSEPDVLEKHRYYH), 1053-1075 (YACSDCTFNTYTPTALLQHLKLH), 1104-1126 (YYCKNCSFKTSIHRNFIEHSAYH), 1162-1184 (KYCKKCTFKCVSQSNFIEHLDRH), 1190-1212 (YKCYSCDYSDNTKSVVDFHQLNH), and 1261-1284 (LKCPSCEYFCHVSSELAFHMSVHH).

Expressed in neurons.

It is found in the nucleus. Its function is as follows. Probable transcriptional regulator, which participates in the transcriptional repression of the presenilin protein hop-1. Might play a role in the oxidative stress response. This Caenorhabditis elegans protein is Suppressor of presenilin protein 4 (spr-4).